A 613-amino-acid chain; its full sequence is Vitamin B12 transporter BtuB (613 aa).

An N-terminal signal peptide occupies residues 1-22 (MQKSLLAIAMASLLTPISYLHA). Positions 29 to 36 (DTVVVTAN) match the TonB box motif. Residues 41 to 154 (VESSVLASIS…IGGVIHIKTI (114 aa)) enclose the TBDR plug domain. The 455-residue stretch at 159-613 (QTKHDANLGY…NWFATVNYRF (455 aa)) folds into the TBDR beta-barrel domain. Positions 591-613 (HSSGGKYYVGEGRNWFATVNYRF) match the TonB C-terminal box motif.

This sequence belongs to the TonB-dependent receptor family. BtuB (TC 1.B.14.3.1) subfamily.

The protein localises to the cell outer membrane. Involved in the active translocation of vitamin B12 (cyanocobalamin) across the outer membrane to the periplasmic space. It derives its energy for transport by interacting with the trans-periplasmic membrane protein TonB. The polypeptide is Vitamin B12 transporter BtuB (Vibrio vulnificus (strain YJ016)).